Reading from the N-terminus, the 334-residue chain is Transmembrane protein 41 homolog (334 aa).

An N-linked (GlcNAc...) asparagine glycan is attached at Asn-43. The interval 47–79 (KNKNNNIDNKKNSNNNNNNNNNNNNKNSISNNN) is disordered. N-linked (GlcNAc...) asparagine glycosylation occurs at Asn-83. 6 helical membrane passes run 97–117 (LPLW…VFLF), 156–176 (FIVI…SIPG), 192–214 (VGFP…ISYY), 246–266 (IVFL…ASPL), 269–289 (VPIH…TFLA), and 305–325 (IFDL…ILPT).

It belongs to the TMEM41 family.

The protein localises to the membrane. This Dictyostelium discoideum (Social amoeba) protein is Transmembrane protein 41 homolog.